We begin with the raw amino-acid sequence, 185 residues long: Ribosome-recycling factor (185 aa).

The protein belongs to the RRF family.

The protein localises to the cytoplasm. Its function is as follows. Responsible for the release of ribosomes from messenger RNA at the termination of protein biosynthesis. May increase the efficiency of translation by recycling ribosomes from one round of translation to another. This chain is Ribosome-recycling factor, found in Streptococcus pneumoniae (strain P1031).